A 209-amino-acid chain; its full sequence is MRQHVNPLSKNFFEIDPIPPLNQVFENPKLPLHLDIGCASGEFLFELSLKNKNWNYIGIEIREKLVLNANLKMKSRENKNLYFSFGNANNIFNQTNNKSIINLITSISFNFPDPWFKKKHHKRRVIQPKLLNLLSNSMKKGSLIFIKTDVRDLFDHMELTISESIKFKKIPYQDVDFCESFNPNRIQTNREKYVILNQLKIYESIYKKI.

S-adenosyl-L-methionine contacts are provided by Asp-35, Glu-60, Asn-87, and Asp-113. Residue Asp-113 is part of the active site. Substrate is bound by residues Lys-117 and Asp-149.

This sequence belongs to the class I-like SAM-binding methyltransferase superfamily. TrmB family.

It carries out the reaction guanosine(46) in tRNA + S-adenosyl-L-methionine = N(7)-methylguanosine(46) in tRNA + S-adenosyl-L-homocysteine. It participates in tRNA modification; N(7)-methylguanine-tRNA biosynthesis. Catalyzes the formation of N(7)-methylguanine at position 46 (m7G46) in tRNA. This chain is tRNA (guanine-N(7)-)-methyltransferase, found in Prochlorococcus marinus subsp. pastoris (strain CCMP1986 / NIES-2087 / MED4).